The primary structure comprises 291 residues: Elongation factor Ts, mitochondrial (291 aa).

The protein belongs to the EF-Ts family.

The protein resides in the mitochondrion. Functionally, associates with the EF-Tu.GDP complex and induces the exchange of GDP to GTP. It remains bound to the aminoacyl-tRNA.EF-Tu.GTP complex up to the GTP hydrolysis stage on the ribosome. The polypeptide is Elongation factor Ts, mitochondrial (Nematostella vectensis (Starlet sea anemone)).